Consider the following 80-residue polypeptide: Exodeoxyribonuclease 7 small subunit (80 aa).

It belongs to the XseB family. In terms of assembly, heterooligomer composed of large and small subunits.

The protein resides in the cytoplasm. The catalysed reaction is Exonucleolytic cleavage in either 5'- to 3'- or 3'- to 5'-direction to yield nucleoside 5'-phosphates.. In terms of biological role, bidirectionally degrades single-stranded DNA into large acid-insoluble oligonucleotides, which are then degraded further into small acid-soluble oligonucleotides. This is Exodeoxyribonuclease 7 small subunit from Pseudomonas fluorescens (strain Pf0-1).